The primary structure comprises 173 residues: Ribulose bisphosphate carboxylase small subunit, chloroplastic 2 (173 aa).

Residues V1 to E33 constitute a chloroplast transit peptide.

This sequence belongs to the RuBisCO small chain family. As to quaternary structure, heterohexadecamer of 8 large and 8 small subunits.

The protein localises to the plastid. The protein resides in the chloroplast. RuBisCO catalyzes two reactions: the carboxylation of D-ribulose 1,5-bisphosphate, the primary event in carbon dioxide fixation, as well as the oxidative fragmentation of the pentose substrate. Both reactions occur simultaneously and in competition at the same active site. Although the small subunit is not catalytic it is essential for maximal activity. The chain is Ribulose bisphosphate carboxylase small subunit, chloroplastic 2 from Acetabularia acetabulum (Mermaid's wine glass).